Consider the following 402-residue polypeptide: Serine/threonine transporter SstT (402 aa).

Helical transmembrane passes span 17-37, 44-64, 78-98, 138-158, 179-199, 212-232, 295-315, and 336-356; these read IAIG…ITVI, FVGG…ANAL, IIVL…ISHY, ALSQ…GFAM, IVRW…FDTI, VLIL…NPII, MAGA…TLGI, and ASGI…LFGI.

This sequence belongs to the dicarboxylate/amino acid:cation symporter (DAACS) (TC 2.A.23) family.

It localises to the cell membrane. It catalyses the reaction L-serine(in) + Na(+)(in) = L-serine(out) + Na(+)(out). The enzyme catalyses L-threonine(in) + Na(+)(in) = L-threonine(out) + Na(+)(out). In terms of biological role, involved in the import of serine and threonine into the cell, with the concomitant import of sodium (symport system). The chain is Serine/threonine transporter SstT from Streptococcus thermophilus (strain ATCC BAA-250 / LMG 18311).